The following is a 358-amino-acid chain: UDP-N-acetylglucosamine--N-acetylmuramyl-(pentapeptide) pyrophosphoryl-undecaprenol N-acetylglucosamine transferase (358 aa).

Residues 11 to 13 (TGG), R163, S191, I245, and Q290 contribute to the UDP-N-acetyl-alpha-D-glucosamine site.

It belongs to the glycosyltransferase 28 family. MurG subfamily.

The protein localises to the cell inner membrane. It carries out the reaction di-trans,octa-cis-undecaprenyl diphospho-N-acetyl-alpha-D-muramoyl-L-alanyl-D-glutamyl-meso-2,6-diaminopimeloyl-D-alanyl-D-alanine + UDP-N-acetyl-alpha-D-glucosamine = di-trans,octa-cis-undecaprenyl diphospho-[N-acetyl-alpha-D-glucosaminyl-(1-&gt;4)]-N-acetyl-alpha-D-muramoyl-L-alanyl-D-glutamyl-meso-2,6-diaminopimeloyl-D-alanyl-D-alanine + UDP + H(+). It participates in cell wall biogenesis; peptidoglycan biosynthesis. Functionally, cell wall formation. Catalyzes the transfer of a GlcNAc subunit on undecaprenyl-pyrophosphoryl-MurNAc-pentapeptide (lipid intermediate I) to form undecaprenyl-pyrophosphoryl-MurNAc-(pentapeptide)GlcNAc (lipid intermediate II). The chain is UDP-N-acetylglucosamine--N-acetylmuramyl-(pentapeptide) pyrophosphoryl-undecaprenol N-acetylglucosamine transferase from Herminiimonas arsenicoxydans.